The sequence spans 20 residues: Protein YfiS (20 aa).

This Escherichia coli (strain K12) protein is Protein YfiS.